The following is a 1035-amino-acid chain: Putative protein FAM47C (1035 aa).

Disordered regions lie at residues 1–21 and 159–797; these read MGDQ…TPWY and LEDA…RRVS. A compositionally biased stretch (basic and acidic residues) spans 159–173; it reads LEDAGSCEGQEKTTD. Over residues 380–392 the composition is skewed to pro residues; the sequence is PEPPKTRVPPLRP. A compositionally biased stretch (basic and acidic residues) spans 478–490; sequence PPEKDVSHLRPEP. Positions 533–544 are enriched in polar residues; sequence SLHQAPPESSVS. Basic and acidic residues-rich tracts occupy residues 611–622, 683–694, and 753–766; these read PETRVSHLRPEP and EPLE…RPEP.

Belongs to the FAM47 family.

This Homo sapiens (Human) protein is Putative protein FAM47C (FAM47C).